Consider the following 915-residue polypeptide: Protein translocase subunit SecA (915 aa).

ATP contacts are provided by residues Gln87, 105 to 109 (GEGKT), and Asp512. Positions 881–915 (LPGTAPVRPEPKIGRNEPCPCGSGKKYKHCHGQLN) are disordered. Zn(2+) contacts are provided by Cys899, Cys901, Cys910, and His911. Basic residues predominate over residues 905–915 (KKYKHCHGQLN).

It belongs to the SecA family. Monomer and homodimer. Part of the essential Sec protein translocation apparatus which comprises SecA, SecYEG and auxiliary proteins SecDF-YajC and YidC. Zn(2+) serves as cofactor.

It localises to the cell inner membrane. It is found in the cytoplasm. It carries out the reaction ATP + H2O + cellular proteinSide 1 = ADP + phosphate + cellular proteinSide 2.. Functionally, part of the Sec protein translocase complex. Interacts with the SecYEG preprotein conducting channel. Has a central role in coupling the hydrolysis of ATP to the transfer of proteins into and across the cell membrane, serving both as a receptor for the preprotein-SecB complex and as an ATP-driven molecular motor driving the stepwise translocation of polypeptide chains across the membrane. This chain is Protein translocase subunit SecA, found in Azotobacter vinelandii (strain DJ / ATCC BAA-1303).